We begin with the raw amino-acid sequence, 882 residues long: Lon protease homolog, mitochondrial (882 aa).

The N-terminal 34 residues, 1–34, are a transit peptide targeting the mitochondrion; sequence MIHVLKSRSTLLTASSIVRTSVGSSSRYSQTRTY. A Lon N-terminal domain is found at 68 to 281; it reads TLGLPLVSRP…KALVLLNRER (214 aa). An ATP-binding site is contributed by 435 to 442; sequence GPPGTGKT. A Lon proteolytic domain is found at 687 to 878; that stretch reads PLPHGIVMGL…DKVYEVAFSS (192 aa). Active-site residues include S784 and K827.

This sequence belongs to the peptidase S16 family. In terms of assembly, homohexamer or homoheptamer. Organized in a ring with a central cavity.

The protein resides in the mitochondrion matrix. The enzyme catalyses Hydrolysis of proteins in presence of ATP.. ATP-dependent serine protease that mediates the selective degradation of misfolded, unassembled or oxidatively damaged polypeptides as well as certain short-lived regulatory proteins in the mitochondrial matrix. May also have a chaperone function in the assembly of inner membrane protein complexes. Participates in the regulation of mitochondrial gene expression and in the maintenance of the integrity of the mitochondrial genome. Binds to mitochondrial DNA in a site-specific manner. The protein is Lon protease homolog, mitochondrial of Phaeodactylum tricornutum (strain CCAP 1055/1).